The following is a 157-amino-acid chain: uncharacterized protein (157 aa).

Residues 36–63 (QIEELNELCQFFNISLTYTRESLEELEN) are a coiled coil.

This is an uncharacterized protein from Bacillus subtilis (strain 168).